Here is a 218-residue protein sequence, read N- to C-terminus: Serine/threonine-protein phosphatase 2 (218 aa).

Mn(2+) contacts are provided by aspartate 22, histidine 24, aspartate 51, and asparagine 77. Residue histidine 78 is the Proton donor of the active site. Mn(2+) is bound at residue histidine 187.

It belongs to the PPP phosphatase family. Mn(2+) serves as cofactor.

It carries out the reaction O-phospho-L-seryl-[protein] + H2O = L-seryl-[protein] + phosphate. The enzyme catalyses O-phospho-L-threonyl-[protein] + H2O = L-threonyl-[protein] + phosphate. Functionally, has been shown, in vitro, to act on Ser, Thr and Tyr-phosphorylated substrates. This chain is Serine/threonine-protein phosphatase 2 (pphB), found in Escherichia coli (strain K12).